Here is a 135-residue protein sequence, read N- to C-terminus: UPF0299 membrane protein ECA2828 (135 aa).

Helical transmembrane passes span 5–25 (FIVC…LLAG), 30–50 (ALLP…FTLL), 63–83 (GCYL…VGVM), and 93–113 (FGPI…VVGF).

This sequence belongs to the UPF0299 family.

It is found in the cell inner membrane. The protein is UPF0299 membrane protein ECA2828 of Pectobacterium atrosepticum (strain SCRI 1043 / ATCC BAA-672) (Erwinia carotovora subsp. atroseptica).